Consider the following 558-residue polypeptide: uncharacterized protein (558 aa).

Helical transmembrane passes span 15 to 32 (PSVT…ALGL), 39 to 61 (IGTI…HFGV), 76 to 95 (LVIF…FPSL), 104 to 126 (LISL…ILGI), and 166 to 188 (MALA…LALL). RCK C-terminal domains lie at 196-278 (EERD…LFGK) and 286-370 (RPDI…ILGD). Transmembrane regions (helical) follow at residues 383-405 (LFGG…GVSM), 409-426 (LGLA…GAFG), 446-468 (FGII…DTII), 473-495 (LLWV…WASI), and 533-555 (VVYA…IMIL).

This sequence belongs to the AAE transporter (TC 2.A.81) family.

It is found in the cell membrane. This is an uncharacterized protein from Porphyromonas gingivalis (strain ATCC BAA-308 / W83).